A 287-amino-acid polypeptide reads, in one-letter code: uncharacterized protein (287 aa).

Residues Ser115 to Ser287 enclose the ATP-grasp domain.

This is an uncharacterized protein from Mycoplasma genitalium (strain ATCC 33530 / DSM 19775 / NCTC 10195 / G37) (Mycoplasmoides genitalium).